A 315-amino-acid chain; its full sequence is HTH-type transcriptional regulator TreR (315 aa).

Residues 5–59 enclose the HTH lacI-type domain; that stretch reads LTIKDIARLSGVGKSTVSRVLNNESGVSERTRERVEAVMNQHGFSPSRSARAMRG. The H-T-H motif DNA-binding region spans 7–26; the sequence is IKDIARLSGVGKSTVSRVLN. Residues 71–77, G126, R147, 187–190, R194, T242, and Y284 each bind alpha,alpha-trehalose 6-phosphate; these read RLDSLSE and DITT.

In terms of assembly, homodimer.

In terms of biological role, repressor of the treBC operon. It is able to bind trehalose-6-phosphate. The protein is HTH-type transcriptional regulator TreR (treR) of Salmonella typhimurium (strain LT2 / SGSC1412 / ATCC 700720).